A 261-amino-acid polypeptide reads, in one-letter code: Global transcriptional regulator CodY (261 aa).

Residues 1–159 (MPNLLEKTRK…ASTVVGIQLL (159 aa)) form a GAF domain region. The H-T-H motif DNA-binding region spans 207-226 (ASVIADRIGITRSVIVNALR).

Belongs to the CodY family.

It is found in the cytoplasm. Functionally, DNA-binding global transcriptional regulator which is involved in the adaptive response to starvation and acts by directly or indirectly controlling the expression of numerous genes in response to nutrient availability. During rapid exponential growth, CodY is highly active and represses genes whose products allow adaptation to nutrient depletion. The polypeptide is Global transcriptional regulator CodY (Streptococcus agalactiae serotype Ia (strain ATCC 27591 / A909 / CDC SS700)).